The primary structure comprises 214 residues: MTTLADLRINYSRASLDEADAAPDPFAQFDRWFNEALAAKLPEPNTMTLATVGADGRPSARIVLVKGVDERGFVFFTNYESRKGRDLAAHPYAALLFYWIELERQVRIEGRVEKTSAEESDRYFASRPVGSRIGAWASEQSTVIDSRATLEAREKAFSERYGDDPPRPPHWGGYRVVPDTLEFWQGRPSRLHDRLVYTRDAAAPHGWTISRLSP.

Substrate is bound by residues 8-11 and K66; that span reads RINY. Residues 61–66, 76–77, R82, K83, and Q105 each bind FMN; these read RIVLVK and FT. Y123, R127, and S131 together coordinate substrate. Residues 140–141 and W184 contribute to the FMN site; that span reads QS. 190-192 is a substrate binding site; the sequence is RLH. R194 provides a ligand contact to FMN.

The protein belongs to the pyridoxamine 5'-phosphate oxidase family. Homodimer. It depends on FMN as a cofactor.

The catalysed reaction is pyridoxamine 5'-phosphate + O2 + H2O = pyridoxal 5'-phosphate + H2O2 + NH4(+). It carries out the reaction pyridoxine 5'-phosphate + O2 = pyridoxal 5'-phosphate + H2O2. The protein operates within cofactor metabolism; pyridoxal 5'-phosphate salvage; pyridoxal 5'-phosphate from pyridoxamine 5'-phosphate: step 1/1. It participates in cofactor metabolism; pyridoxal 5'-phosphate salvage; pyridoxal 5'-phosphate from pyridoxine 5'-phosphate: step 1/1. Functionally, catalyzes the oxidation of either pyridoxine 5'-phosphate (PNP) or pyridoxamine 5'-phosphate (PMP) into pyridoxal 5'-phosphate (PLP). The chain is Pyridoxine/pyridoxamine 5'-phosphate oxidase from Burkholderia multivorans (strain ATCC 17616 / 249).